The chain runs to 487 residues: Glutamyl-tRNA(Gln) amidotransferase subunit A (487 aa).

Residues K80 and S155 each act as charge relay system in the active site. The active-site Acyl-ester intermediate is S179.

This sequence belongs to the amidase family. GatA subfamily. In terms of assembly, heterotrimer of A, B and C subunits.

It carries out the reaction L-glutamyl-tRNA(Gln) + L-glutamine + ATP + H2O = L-glutaminyl-tRNA(Gln) + L-glutamate + ADP + phosphate + H(+). Its function is as follows. Allows the formation of correctly charged Gln-tRNA(Gln) through the transamidation of misacylated Glu-tRNA(Gln) in organisms which lack glutaminyl-tRNA synthetase. The reaction takes place in the presence of glutamine and ATP through an activated gamma-phospho-Glu-tRNA(Gln). The chain is Glutamyl-tRNA(Gln) amidotransferase subunit A from Leptospira interrogans serogroup Icterohaemorrhagiae serovar Lai (strain 56601).